The primary structure comprises 317 residues: tRNA pseudouridine synthase B (317 aa).

The Nucleophile role is filled by aspartate 47.

Belongs to the pseudouridine synthase TruB family. Type 1 subfamily.

It catalyses the reaction uridine(55) in tRNA = pseudouridine(55) in tRNA. In terms of biological role, responsible for synthesis of pseudouridine from uracil-55 in the psi GC loop of transfer RNAs. In Shewanella sp. (strain MR-7), this protein is tRNA pseudouridine synthase B.